The primary structure comprises 715 residues: Protein naked cuticle homolog (715 aa).

The region spanning 18–53 (KKPQPLQFSFTLYDLDGHGKITKDDIAGIVSTIYES) is the EF-hand domain. Residues 256 to 282 (SRAKRKVVRKSRSSRKASKLTDDFSRP) are disordered. Positions 257–273 (RAKRKVVRKSRSSRKAS) are enriched in basic residues. The segment at 305 to 334 (ECWKSSLCRRELIEIIRDSMVKNSLCFQPN) is required for nuclear localization and inhibition of Wnt signaling. Residues 639-690 (ELHQSVQQQQGTHQQQQQPQSSVSSPTHHHHHHAGASLLGENSGSSASAAST) are disordered. Low complexity-rich tracts occupy residues 642-664 (QSVQQQQGTHQQQQQPQSSVSSP) and 673-690 (GASLLGENSGSSASAAST).

The protein belongs to the NKD family.

The protein localises to the cell membrane. It is found in the cytoplasm. Its subcellular location is the nucleus. Cell autonomous antagonist of the canonical Wnt signaling pathway. May activate a second Wnt signaling pathway that controls planar cell polarity. Required for neuroblast specification. This Aedes aegypti (Yellowfever mosquito) protein is Protein naked cuticle homolog.